We begin with the raw amino-acid sequence, 300 residues long: Bifunctional protein FolD 2 (300 aa).

NADP(+) contacts are provided by residues 165 to 167 (GRS), serine 190, and isoleucine 231.

It belongs to the tetrahydrofolate dehydrogenase/cyclohydrolase family. Homodimer.

It carries out the reaction (6R)-5,10-methylene-5,6,7,8-tetrahydrofolate + NADP(+) = (6R)-5,10-methenyltetrahydrofolate + NADPH. The enzyme catalyses (6R)-5,10-methenyltetrahydrofolate + H2O = (6R)-10-formyltetrahydrofolate + H(+). Its pathway is one-carbon metabolism; tetrahydrofolate interconversion. In terms of biological role, catalyzes the oxidation of 5,10-methylenetetrahydrofolate to 5,10-methenyltetrahydrofolate and then the hydrolysis of 5,10-methenyltetrahydrofolate to 10-formyltetrahydrofolate. The sequence is that of Bifunctional protein FolD 2 from Pseudomonas savastanoi pv. phaseolicola (strain 1448A / Race 6) (Pseudomonas syringae pv. phaseolicola (strain 1448A / Race 6)).